Reading from the N-terminus, the 63-residue chain is Progonadoliberin-1 (63 aa).

Position 1 is a pyrrolidone carboxylic acid (glutamine 1). Glycine amide is present on glycine 10.

Belongs to the GnRH family. In terms of processing, the precursor is cleaved by ACE, which removes the Gly-Lys-Arg peptide at the C-terminus, leading to mature hormone. The mature form of Gonadoliberin-1 is also cleaved and degraded by ACE.

The protein resides in the secreted. In terms of biological role, stimulates the secretion of gonadotropins; it stimulates the secretion of both luteinizing and follicle-stimulating hormones. The chain is Progonadoliberin-1 (GNRH1) from Mesocricetus auratus (Golden hamster).